A 423-amino-acid polypeptide reads, in one-letter code: Imidazolonepropionase (423 aa).

Fe(3+) contacts are provided by H91 and H93. Zn(2+)-binding residues include H91 and H93. Residues R100, Y163, and H193 each coordinate 4-imidazolone-5-propanoate. Residue Y163 coordinates N-formimidoyl-L-glutamate. A Fe(3+)-binding site is contributed by H257. A Zn(2+)-binding site is contributed by H257. 4-imidazolone-5-propanoate is bound at residue Q260. Fe(3+) is bound at residue D331. Residue D331 coordinates Zn(2+). Positions 333 and 335 each coordinate N-formimidoyl-L-glutamate. Residue T336 coordinates 4-imidazolone-5-propanoate.

It belongs to the metallo-dependent hydrolases superfamily. HutI family. Requires Zn(2+) as cofactor. Fe(3+) serves as cofactor.

The protein localises to the cytoplasm. The enzyme catalyses 4-imidazolone-5-propanoate + H2O = N-formimidoyl-L-glutamate. It functions in the pathway amino-acid degradation; L-histidine degradation into L-glutamate; N-formimidoyl-L-glutamate from L-histidine: step 3/3. Functionally, catalyzes the hydrolytic cleavage of the carbon-nitrogen bond in imidazolone-5-propanoate to yield N-formimidoyl-L-glutamate. It is the third step in the universal histidine degradation pathway. In Bdellovibrio bacteriovorus (strain ATCC 15356 / DSM 50701 / NCIMB 9529 / HD100), this protein is Imidazolonepropionase.